The sequence spans 273 residues: 4-hydroxy-tetrahydrodipicolinate reductase (273 aa).

Residues Gly-11–Met-16 and Gly-106–Thr-108 each bind NAD(+). His-162 acts as the Proton donor/acceptor in catalysis. His-163 serves as a coordination point for (S)-2,3,4,5-tetrahydrodipicolinate. The Proton donor role is filled by Lys-166. A (S)-2,3,4,5-tetrahydrodipicolinate-binding site is contributed by Gly-172–Thr-173.

Belongs to the DapB family.

It is found in the cytoplasm. It catalyses the reaction (S)-2,3,4,5-tetrahydrodipicolinate + NAD(+) + H2O = (2S,4S)-4-hydroxy-2,3,4,5-tetrahydrodipicolinate + NADH + H(+). The catalysed reaction is (S)-2,3,4,5-tetrahydrodipicolinate + NADP(+) + H2O = (2S,4S)-4-hydroxy-2,3,4,5-tetrahydrodipicolinate + NADPH + H(+). It participates in amino-acid biosynthesis; L-lysine biosynthesis via DAP pathway; (S)-tetrahydrodipicolinate from L-aspartate: step 4/4. Functionally, catalyzes the conversion of 4-hydroxy-tetrahydrodipicolinate (HTPA) to tetrahydrodipicolinate. The chain is 4-hydroxy-tetrahydrodipicolinate reductase from Synechococcus elongatus (strain ATCC 33912 / PCC 7942 / FACHB-805) (Anacystis nidulans R2).